A 371-amino-acid chain; its full sequence is Queuine tRNA-ribosyltransferase (371 aa).

D90 serves as the catalytic Proton acceptor. Substrate contacts are provided by residues 90–94 (DSGGF), D144, Q189, and G215. The tract at residues 246 to 252 (GVGTPEN) is RNA binding. D265 acts as the Nucleophile in catalysis. An RNA binding; important for wobble base 34 recognition region spans residues 270 to 274 (TRNAR). Residues C303, C305, C308, and H334 each coordinate Zn(2+).

It belongs to the queuine tRNA-ribosyltransferase family. In terms of assembly, homodimer. Within each dimer, one monomer is responsible for RNA recognition and catalysis, while the other monomer binds to the replacement base PreQ1. The cofactor is Zn(2+).

The enzyme catalyses 7-aminomethyl-7-carbaguanine + guanosine(34) in tRNA = 7-aminomethyl-7-carbaguanosine(34) in tRNA + guanine. Its pathway is tRNA modification; tRNA-queuosine biosynthesis. In terms of biological role, catalyzes the base-exchange of a guanine (G) residue with the queuine precursor 7-aminomethyl-7-deazaguanine (PreQ1) at position 34 (anticodon wobble position) in tRNAs with GU(N) anticodons (tRNA-Asp, -Asn, -His and -Tyr). Catalysis occurs through a double-displacement mechanism. The nucleophile active site attacks the C1' of nucleotide 34 to detach the guanine base from the RNA, forming a covalent enzyme-RNA intermediate. The proton acceptor active site deprotonates the incoming PreQ1, allowing a nucleophilic attack on the C1' of the ribose to form the product. After dissociation, two additional enzymatic reactions on the tRNA convert PreQ1 to queuine (Q), resulting in the hypermodified nucleoside queuosine (7-(((4,5-cis-dihydroxy-2-cyclopenten-1-yl)amino)methyl)-7-deazaguanosine). This chain is Queuine tRNA-ribosyltransferase, found in Helicobacter pylori (strain P12).